We begin with the raw amino-acid sequence, 292 residues long: Small ribosomal subunit biogenesis GTPase RsgA (292 aa).

A CP-type G domain is found at 64–221 (RSELFRPAVA…LVDTPGFSSL (158 aa)). GTP contacts are provided by residues 113 to 116 (NKMD) and 164 to 172 (GPSGVGKST). The Zn(2+) site is built by cysteine 245, cysteine 250, histidine 252, and cysteine 258.

Belongs to the TRAFAC class YlqF/YawG GTPase family. RsgA subfamily. Monomer. Associates with 30S ribosomal subunit, binds 16S rRNA. Zn(2+) serves as cofactor.

It is found in the cytoplasm. One of several proteins that assist in the late maturation steps of the functional core of the 30S ribosomal subunit. Helps release RbfA from mature subunits. May play a role in the assembly of ribosomal proteins into the subunit. Circularly permuted GTPase that catalyzes slow GTP hydrolysis, GTPase activity is stimulated by the 30S ribosomal subunit. This chain is Small ribosomal subunit biogenesis GTPase RsgA, found in Clostridium botulinum (strain ATCC 19397 / Type A).